The primary structure comprises 228 residues: Potassium/proton antiporter CemA (228 aa).

The next 3 membrane-spanning stretches (helical) occupy residues 6–26, 113–133, and 188–208; these read FIPL…SFSF, IICF…LFIL, and IISG…KYWI.

The protein belongs to the CemA family.

It localises to the plastid. It is found in the chloroplast inner membrane. It catalyses the reaction K(+)(in) + H(+)(out) = K(+)(out) + H(+)(in). In terms of biological role, contributes to K(+)/H(+) antiport activity by supporting proton efflux to control proton extrusion and homeostasis in chloroplasts in a light-dependent manner to modulate photosynthesis. Prevents excessive induction of non-photochemical quenching (NPQ) under continuous-light conditions. Indirectly promotes efficient inorganic carbon uptake into chloroplasts. In Populus alba (White poplar), this protein is Potassium/proton antiporter CemA.